A 365-amino-acid polypeptide reads, in one-letter code: Isopentenyl-diphosphate delta-isomerase (365 aa).

Arg8–Lys9 is a substrate binding site. FMN is bound by residues Ser67–Thr69, Ser97, and Asn126. Ser97 to Arg99 serves as a coordination point for substrate. Substrate is bound at residue Gln160. Glu161 serves as a coordination point for Mg(2+). FMN-binding positions include Lys192, Thr222, Gly272 to Arg274, and Ala293 to Leu294.

It belongs to the IPP isomerase type 2 family. Homooctamer. Dimer of tetramers. It depends on FMN as a cofactor. NADPH is required as a cofactor. The cofactor is Mg(2+).

It localises to the cytoplasm. The enzyme catalyses isopentenyl diphosphate = dimethylallyl diphosphate. Involved in the biosynthesis of isoprenoids. Catalyzes the 1,3-allylic rearrangement of the homoallylic substrate isopentenyl (IPP) to its allylic isomer, dimethylallyl diphosphate (DMAPP). This is Isopentenyl-diphosphate delta-isomerase from Methanosarcina acetivorans (strain ATCC 35395 / DSM 2834 / JCM 12185 / C2A).